Consider the following 535-residue polypeptide: Pre-mRNA-splicing factor SLU7-A (535 aa).

Residues 21–44 are disordered; the sequence is EEARKAGLAPAEVDEDGKEINPHI. The CCHC-type zinc finger occupies 96-109; sequence CQNCGAMTHTAKAC. Over residues 176 to 190 the composition is skewed to basic and acidic residues; that stretch reads LKKLEEKNNNEKGDD. 2 disordered regions span residues 176–204 and 489–508; these read LKKL…DLRV and EDLS…NVKY. Positions 191 to 203 are enriched in acidic residues; it reads ANSDGEEDEDDLR. Residue Ser-193 is modified to Phosphoserine. Positions 486 to 493 match the Nuclear localization signal motif; the sequence is LKKEDLSR. Positions 489 to 501 are enriched in basic and acidic residues; that stretch reads EDLSRREEKDERK.

It belongs to the SLU7 family. Mainly expressed in tissues undergoing cell proliferation, particularly in lateral organs.

The protein localises to the nucleus. Its function is as follows. Participates in the second catalytic step of pre-mRNA splicing, when the free hydroxyl group of exon I attacks the 3'-splice site to generate spliced mRNA and the excised lariat intron. Together with SMP2, involved in the timing of cell cycle arrest during leaf development, in a STRUWWELPETER (SWP) dependent manner; promotes cell proliferation in developing organs. The polypeptide is Pre-mRNA-splicing factor SLU7-A (Arabidopsis thaliana (Mouse-ear cress)).